The sequence spans 212 residues: Thymidylate kinase (212 aa).

11–18 (GPEGAGKT) is a binding site for ATP.

It belongs to the thymidylate kinase family.

It carries out the reaction dTMP + ATP = dTDP + ADP. In terms of biological role, phosphorylation of dTMP to form dTDP in both de novo and salvage pathways of dTTP synthesis. The protein is Thymidylate kinase of Streptococcus pneumoniae serotype 19F (strain G54).